A 476-amino-acid chain; its full sequence is Aspartyl/glutamyl-tRNA(Asn/Gln) amidotransferase subunit B (476 aa).

This sequence belongs to the GatB/GatE family. GatB subfamily. In terms of assembly, heterotrimer of A, B and C subunits.

It carries out the reaction L-glutamyl-tRNA(Gln) + L-glutamine + ATP + H2O = L-glutaminyl-tRNA(Gln) + L-glutamate + ADP + phosphate + H(+). It catalyses the reaction L-aspartyl-tRNA(Asn) + L-glutamine + ATP + H2O = L-asparaginyl-tRNA(Asn) + L-glutamate + ADP + phosphate + 2 H(+). In terms of biological role, allows the formation of correctly charged Asn-tRNA(Asn) or Gln-tRNA(Gln) through the transamidation of misacylated Asp-tRNA(Asn) or Glu-tRNA(Gln) in organisms which lack either or both of asparaginyl-tRNA or glutaminyl-tRNA synthetases. The reaction takes place in the presence of glutamine and ATP through an activated phospho-Asp-tRNA(Asn) or phospho-Glu-tRNA(Gln). The polypeptide is Aspartyl/glutamyl-tRNA(Asn/Gln) amidotransferase subunit B (Clostridium botulinum (strain Kyoto / Type A2)).